The following is a 139-amino-acid chain: Nucleoside diphosphate kinase (139 aa).

ATP-binding residues include lysine 11, phenylalanine 59, arginine 87, threonine 93, arginine 104, and asparagine 114. Histidine 117 functions as the Pros-phosphohistidine intermediate in the catalytic mechanism.

This sequence belongs to the NDK family. Homotetramer. Requires Mg(2+) as cofactor.

It localises to the cytoplasm. It carries out the reaction a 2'-deoxyribonucleoside 5'-diphosphate + ATP = a 2'-deoxyribonucleoside 5'-triphosphate + ADP. It catalyses the reaction a ribonucleoside 5'-diphosphate + ATP = a ribonucleoside 5'-triphosphate + ADP. Its function is as follows. Major role in the synthesis of nucleoside triphosphates other than ATP. The ATP gamma phosphate is transferred to the NDP beta phosphate via a ping-pong mechanism, using a phosphorylated active-site intermediate. This is Nucleoside diphosphate kinase from Coxiella burnetii (strain CbuK_Q154) (Coxiella burnetii (strain Q154)).